A 344-amino-acid chain; its full sequence is Arginine N-succinyltransferase (344 aa).

L125 serves as a coordination point for succinyl-CoA. Residue H229 is the Proton donor of the active site.

This sequence belongs to the arginine N-succinyltransferase family.

It catalyses the reaction succinyl-CoA + L-arginine = N(2)-succinyl-L-arginine + CoA + H(+). Its pathway is amino-acid degradation; L-arginine degradation via AST pathway; L-glutamate and succinate from L-arginine: step 1/5. Catalyzes the transfer of succinyl-CoA to arginine to produce N(2)-succinylarginine. The sequence is that of Arginine N-succinyltransferase from Shigella flexneri.